We begin with the raw amino-acid sequence, 317 residues long: GTPase Era (317 aa).

In terms of domain architecture, Era-type G spans 23–190 (RSGFVALIGP…MDYLVETLPE (168 aa)). The G1 stretch occupies residues 31–38 (GPTNAGKS). A GTP-binding site is contributed by 31 to 38 (GPTNAGKS). Residues 57–61 (QTTRA) form a G2 region. Residues 78 to 81 (DTPG) are G3. GTP contacts are provided by residues 78–82 (DTPGI) and 140–143 (NKID). The tract at residues 140–143 (NKID) is G4. The tract at residues 169–171 (ISA) is G5. The KH type-2 domain maps to 221 to 298 (LHQELPYASH…HLFLFVKVRE (78 aa)).

It belongs to the TRAFAC class TrmE-Era-EngA-EngB-Septin-like GTPase superfamily. Era GTPase family. Monomer.

The protein localises to the cytoplasm. The protein resides in the cell inner membrane. Functionally, an essential GTPase that binds both GDP and GTP, with rapid nucleotide exchange. Plays a role in 16S rRNA processing and 30S ribosomal subunit biogenesis and possibly also in cell cycle regulation and energy metabolism. This chain is GTPase Era, found in Agrobacterium fabrum (strain C58 / ATCC 33970) (Agrobacterium tumefaciens (strain C58)).